Reading from the N-terminus, the 63-residue chain is Large ribosomal subunit protein uL30 (63 aa).

Belongs to the universal ribosomal protein uL30 family. As to quaternary structure, part of the 50S ribosomal subunit.

The chain is Large ribosomal subunit protein uL30 from Rickettsia prowazekii (strain Madrid E).